The following is a 117-amino-acid chain: Small ribosomal subunit protein uS12c (117 aa).

The disordered stretch occupies residues 9–40 (RNARQPIENRKKSPALRGCPQRRGTITPKKPN).

The protein belongs to the universal ribosomal protein uS12 family. Part of the 30S ribosomal subunit.

The protein localises to the plastid. It is found in the chloroplast. Functionally, with S4 and S5 plays an important role in translational accuracy. Located at the interface of the 30S and 50S subunits. The protein is Small ribosomal subunit protein uS12c (rps12) of Pinus koraiensis (Korean pine).